We begin with the raw amino-acid sequence, 172 residues long: RNA pyrophosphohydrolase (172 aa).

The Nudix hydrolase domain maps to 6-149 (GYRLNVGIVI…KRDVYRRAMK (144 aa)). A Nudix box motif is present at residues 38–59 (GGIDDGETPEQAMFRELYEEVG).

It belongs to the Nudix hydrolase family. RppH subfamily. A divalent metal cation serves as cofactor.

In terms of biological role, accelerates the degradation of transcripts by removing pyrophosphate from the 5'-end of triphosphorylated RNA, leading to a more labile monophosphorylated state that can stimulate subsequent ribonuclease cleavage. In Vibrio vulnificus (strain CMCP6), this protein is RNA pyrophosphohydrolase.